The chain runs to 525 residues: Glutamate--cysteine ligase (525 aa).

Belongs to the glutamate--cysteine ligase type 1 family. Type 1 subfamily.

The enzyme catalyses L-cysteine + L-glutamate + ATP = gamma-L-glutamyl-L-cysteine + ADP + phosphate + H(+). It participates in sulfur metabolism; glutathione biosynthesis; glutathione from L-cysteine and L-glutamate: step 1/2. The chain is Glutamate--cysteine ligase from Vibrio vulnificus (strain YJ016).